Here is a 93-residue protein sequence, read N- to C-terminus: Small ribosomal subunit protein uS19 (93 aa).

It belongs to the universal ribosomal protein uS19 family.

Functionally, protein S19 forms a complex with S13 that binds strongly to the 16S ribosomal RNA. The protein is Small ribosomal subunit protein uS19 of Oleidesulfovibrio alaskensis (strain ATCC BAA-1058 / DSM 17464 / G20) (Desulfovibrio alaskensis).